A 359-amino-acid polypeptide reads, in one-letter code: Putative ankyrin repeat protein R190 (359 aa).

ANK repeat units lie at residues 72–103 (RLME…DFRC), 105–133 (DCVI…DLNR), 142–173 (DEII…SISI), 203–234 (LGNL…DINN), 236–260 (HEYS…YGLI), 261–287 (IHDD…IGHK), and 288–317 (PSKQ…DLSD).

The polypeptide is Putative ankyrin repeat protein R190 (Acanthamoeba polyphaga (Amoeba)).